The sequence spans 397 residues: Imidazolonepropionase (397 aa).

Positions 66 and 68 each coordinate Fe(3+). His-66 and His-68 together coordinate Zn(2+). Arg-75, Tyr-138, and His-171 together coordinate 4-imidazolone-5-propanoate. Tyr-138 contributes to the N-formimidoyl-L-glutamate binding site. His-236 is a binding site for Fe(3+). A Zn(2+)-binding site is contributed by His-236. Gln-239 provides a ligand contact to 4-imidazolone-5-propanoate. Asp-311 is a Fe(3+) binding site. Asp-311 is a Zn(2+) binding site. Residues Asn-313 and Gly-315 each contribute to the N-formimidoyl-L-glutamate site. Ser-316 provides a ligand contact to 4-imidazolone-5-propanoate.

Belongs to the metallo-dependent hydrolases superfamily. HutI family. The cofactor is Zn(2+). Fe(3+) serves as cofactor.

The protein localises to the cytoplasm. It catalyses the reaction 4-imidazolone-5-propanoate + H2O = N-formimidoyl-L-glutamate. The protein operates within amino-acid degradation; L-histidine degradation into L-glutamate; N-formimidoyl-L-glutamate from L-histidine: step 3/3. In terms of biological role, catalyzes the hydrolytic cleavage of the carbon-nitrogen bond in imidazolone-5-propanoate to yield N-formimidoyl-L-glutamate. It is the third step in the universal histidine degradation pathway. The protein is Imidazolonepropionase of Roseobacter denitrificans (strain ATCC 33942 / OCh 114) (Erythrobacter sp. (strain OCh 114)).